A 141-amino-acid polypeptide reads, in one-letter code: Galactose-6-phosphate isomerase subunit LacA 1 (141 aa).

It belongs to the LacAB/RpiB family. Heteromultimeric protein consisting of LacA and LacB.

It catalyses the reaction aldehydo-D-galactose 6-phosphate = keto-D-tagatose 6-phosphate. The protein operates within carbohydrate metabolism; D-galactose 6-phosphate degradation; D-tagatose 6-phosphate from D-galactose 6-phosphate: step 1/1. This Streptococcus pyogenes serotype M3 (strain SSI-1) protein is Galactose-6-phosphate isomerase subunit LacA 1.